Reading from the N-terminus, the 122-residue chain is Large ribosomal subunit protein uL14 (122 aa).

Belongs to the universal ribosomal protein uL14 family. Part of the 50S ribosomal subunit. Forms a cluster with proteins L3 and L19. In the 70S ribosome, L14 and L19 interact and together make contacts with the 16S rRNA in bridges B5 and B8. Can interact with ribosomal silencing factor RsfS, which may inhibit ribosomal subunit association.

In terms of biological role, binds to 23S rRNA. Forms part of two intersubunit bridges in the 70S ribosome. The polypeptide is Large ribosomal subunit protein uL14 (Synechocystis sp. (strain ATCC 27184 / PCC 6803 / Kazusa)).